We begin with the raw amino-acid sequence, 324 residues long: Interleukin-12 subunit beta (324 aa).

Residues 1 to 22 (MHLQQLVVSWFSLVWLASPIVA) form the signal peptide. Residues 23-106 (IWELEKNVYV…LSQSLLLLHK (84 aa)) form the Ig-like C2-type domain. Cys-50 and Cys-90 are oxidised to a cystine. N-linked (GlcNAc...) asparagine glycans are attached at residues Asn-125, Asn-135, and Asn-218. The 92-residue stretch at 233–324 (PPKNLQLNPL…WSEWASVSCN (92 aa)) folds into the Fibronectin type-III domain.

Belongs to the IL-12B family. As to quaternary structure, heterodimer with IL12A; disulfide-linked. The heterodimer is known as interleukin IL-12. Heterodimer with IL23A; disulfide-linked. The heterodimer is known as interleukin IL-23. Also secreted as a monomer. Interacts with NBR1; this interaction promotes IL-12 secretion.

The protein localises to the secreted. Its function is as follows. Cytokine that can act as a growth factor for activated T and NK cells, enhance the lytic activity of NK/lymphokine-activated killer cells, and stimulate the production of IFN-gamma by resting PBMC. In terms of biological role, associates with IL23A to form the IL-23 interleukin, a heterodimeric cytokine which functions in innate and adaptive immunity. IL-23 may constitute with IL-17 an acute response to infection in peripheral tissues. IL-23 binds to a heterodimeric receptor complex composed of IL12RB1 and IL23R, activates the Jak-Stat signaling cascade, stimulates memory rather than naive T-cells and promotes production of pro-inflammatory cytokines. IL-23 induces autoimmune inflammation and thus may be responsible for autoimmune inflammatory diseases and may be important for tumorigenesis. This chain is Interleukin-12 subunit beta (IL12B), found in Sus scrofa (Pig).